The chain runs to 451 residues: tRNA modification GTPase MnmE (451 aa).

Residues arginine 23, glutamate 80, and lysine 119 each contribute to the (6S)-5-formyl-5,6,7,8-tetrahydrofolate site. The region spanning 215–372 (GIKVVLAGQP…LRAALLKTAG (158 aa)) is the TrmE-type G domain. A K(+)-binding site is contributed by asparagine 225. GTP contacts are provided by residues 225–230 (NVGKSS), 244–250 (TDIPGTT), and 269–272 (DTAG). Serine 229 serves as a coordination point for Mg(2+). 3 residues coordinate K(+): threonine 244, isoleucine 246, and threonine 249. Threonine 250 is a binding site for Mg(2+). A (6S)-5-formyl-5,6,7,8-tetrahydrofolate-binding site is contributed by lysine 451.

Belongs to the TRAFAC class TrmE-Era-EngA-EngB-Septin-like GTPase superfamily. TrmE GTPase family. In terms of assembly, homodimer. Heterotetramer of two MnmE and two MnmG subunits. It depends on K(+) as a cofactor.

The protein resides in the cytoplasm. In terms of biological role, exhibits a very high intrinsic GTPase hydrolysis rate. Involved in the addition of a carboxymethylaminomethyl (cmnm) group at the wobble position (U34) of certain tRNAs, forming tRNA-cmnm(5)s(2)U34. The sequence is that of tRNA modification GTPase MnmE from Nitrosomonas europaea (strain ATCC 19718 / CIP 103999 / KCTC 2705 / NBRC 14298).